A 78-amino-acid chain; its full sequence is uncharacterized protein (78 aa).

This is an uncharacterized protein from Saccharomyces cerevisiae (strain ATCC 204508 / S288c) (Baker's yeast).